The following is a 506-amino-acid chain: MDLQSMPQKPAEAFPLIAALDLGSNSFHLCLAKANIHGEVRILERLGEKVQLAAGLDEERNLSEEATQRGLDCLRRFAQFISGMPQGSVRVVATNALREARNRSDFIRRAEEVLGHPVEVISGREEARLIYLGVANSMPDSGGRRLVSDIGGGSTEFIIGQGFESELRESLQMGCVSYTQRYFRDGKITPARYAQAYTAARLELMGIENSLRRLGWQQAVGASGTIRAVALAIKAGGHGNGEISPDGLAWLKRKVLKLGDVEKLDLEGIKPDRRTIFPAGLAILEAIFDALELEQMVHSEGALREGVLYDLVGRHQHEDVRERTISSLMQRYHVDPEQASRVEAKALKVLAEVGDAWELNGELHRDLLSWGARVHEIGLDIAHYHYHKHGAYLIEHSDLAGFSRQDQQMLSLLVRGHRRNIPADKLAEFAEEGDKLVRLCIVLRFAILFHHIRGTQEMPSVRLKAEPKSLSVTFPEGWLEANPLTQADFAQEAEWLKRVGYSLNVR.

Belongs to the GppA/Ppx family. As to quaternary structure, homodimer. It depends on Mg(2+) as a cofactor.

The protein localises to the cell membrane. The catalysed reaction is [phosphate](n) + H2O = [phosphate](n-1) + phosphate + H(+). The enzyme catalyses [phosphate](n) + ATP = [phosphate](n+1) + ADP. With respect to regulation, exopolyphosphatase activity is stimulated by NH(4)(+) and K(+). Phosphotransferase activity is insensitive to the addition of K(+) or NH(4)(+) ions. Degradation of inorganic polyphosphates (polyP). Releases orthophosphate processively from the ends of the polyP chain. Also has polyphosphate:ADP phosphotransferase activity, catalyzing the production of ATP from ADP and polyP. This is Exopolyphosphatase from Pseudomonas aeruginosa (strain ATCC 15692 / DSM 22644 / CIP 104116 / JCM 14847 / LMG 12228 / 1C / PRS 101 / PAO1).